A 149-amino-acid polypeptide reads, in one-letter code: uncharacterized protein (149 aa).

A run of 2 helical transmembrane segments spans residues 91-111 (IFIL…LFHY) and 122-142 (ISIL…ICLL).

It is found in the membrane. This is an uncharacterized protein from Dictyostelium discoideum (Social amoeba).